The chain runs to 246 residues: Pyridoxine 5'-phosphate synthase (246 aa).

N12 is a binding site for 3-amino-2-oxopropyl phosphate. Residue 14 to 15 (DH) participates in 1-deoxy-D-xylulose 5-phosphate binding. A 3-amino-2-oxopropyl phosphate-binding site is contributed by R23. The Proton acceptor role is filled by H48. R50 and H55 together coordinate 1-deoxy-D-xylulose 5-phosphate. The Proton acceptor role is filled by E75. T105 is a 1-deoxy-D-xylulose 5-phosphate binding site. The Proton donor role is filled by H196. 3-amino-2-oxopropyl phosphate contacts are provided by residues G197 and 218 to 219 (GH).

It belongs to the PNP synthase family. Homooctamer; tetramer of dimers.

The protein localises to the cytoplasm. The enzyme catalyses 3-amino-2-oxopropyl phosphate + 1-deoxy-D-xylulose 5-phosphate = pyridoxine 5'-phosphate + phosphate + 2 H2O + H(+). The protein operates within cofactor biosynthesis; pyridoxine 5'-phosphate biosynthesis; pyridoxine 5'-phosphate from D-erythrose 4-phosphate: step 5/5. Catalyzes the complicated ring closure reaction between the two acyclic compounds 1-deoxy-D-xylulose-5-phosphate (DXP) and 3-amino-2-oxopropyl phosphate (1-amino-acetone-3-phosphate or AAP) to form pyridoxine 5'-phosphate (PNP) and inorganic phosphate. The sequence is that of Pyridoxine 5'-phosphate synthase from Nitrosococcus oceani (strain ATCC 19707 / BCRC 17464 / JCM 30415 / NCIMB 11848 / C-107).